We begin with the raw amino-acid sequence, 311 residues long: Pyrimidine-specific ribonucleoside hydrolase RihA (311 aa).

The active site involves histidine 240.

It belongs to the IUNH family. RihA subfamily.

Functionally, hydrolyzes cytidine or uridine to ribose and cytosine or uracil, respectively. The chain is Pyrimidine-specific ribonucleoside hydrolase RihA from Salmonella agona (strain SL483).